The chain runs to 514 residues: 2,3-bisphosphoglycerate-independent phosphoglycerate mutase (514 aa).

Residues aspartate 13 and serine 69 each contribute to the Mn(2+) site. Catalysis depends on serine 69, which acts as the Phosphoserine intermediate. Residues histidine 128, 158 to 159, arginine 189, arginine 195, 263 to 266, and lysine 336 each bind substrate; these read RD and RADR. 5 residues coordinate Mn(2+): aspartate 402, histidine 406, aspartate 443, histidine 444, and histidine 461.

This sequence belongs to the BPG-independent phosphoglycerate mutase family. Monomer. Requires Mn(2+) as cofactor.

The catalysed reaction is (2R)-2-phosphoglycerate = (2R)-3-phosphoglycerate. It participates in carbohydrate degradation; glycolysis; pyruvate from D-glyceraldehyde 3-phosphate: step 3/5. In terms of biological role, catalyzes the interconversion of 2-phosphoglycerate and 3-phosphoglycerate. The chain is 2,3-bisphosphoglycerate-independent phosphoglycerate mutase from Akkermansia muciniphila (strain ATCC BAA-835 / DSM 22959 / JCM 33894 / BCRC 81048 / CCUG 64013 / CIP 107961 / Muc).